The following is a 251-amino-acid chain: uncharacterized protein (251 aa).

Residues 1-15 (MSAISSLVLIGWAMC) form the signal peptide. 2 N-linked (GlcNAc...) asparagine glycosylation sites follow: Asn225 and Asn242.

This is an uncharacterized protein from Encephalitozoon cuniculi (strain GB-M1) (Microsporidian parasite).